We begin with the raw amino-acid sequence, 345 residues long: L-rhamnose-proton symporter (345 aa).

A run of 10 helical transmembrane segments spans residues 4 to 24, 38 to 58, 68 to 88, 101 to 121, 131 to 151, 175 to 195, 214 to 234, 259 to 279, 290 to 310, and 323 to 343; these read AITM…CFYA, WSVG…ALLL, FSAA…IGNI, MGIG…TPLL, TAGG…VAIV, LVLA…MDAA, LPSY…FCFI, VLLS…YAWG, ISWM…GLLL, and VLSL…LGMA.

It belongs to the L-rhamnose transporter (TC 2.A.7.6) family.

It localises to the cell inner membrane. It catalyses the reaction L-rhamnopyranose(in) + H(+)(in) = L-rhamnopyranose(out) + H(+)(out). In terms of biological role, uptake of L-rhamnose across the cytoplasmic membrane with the concomitant transport of protons into the cell (symport system). This is L-rhamnose-proton symporter from Cronobacter sakazakii (strain ATCC BAA-894) (Enterobacter sakazakii).